The primary structure comprises 270 residues: Putative carboxymethylenebutenolidase (270 aa).

Active-site residues include Cys-147, Asp-204, and His-236.

The protein belongs to the dienelactone hydrolase family.

The enzyme catalyses 2-(5-oxo-2,5-dihydrofuran-2-ylidene)acetate + H2O = 4-oxohex-2-enedioate + H(+). The polypeptide is Putative carboxymethylenebutenolidase (ysgA) (Salmonella typhi).